The primary structure comprises 443 residues: Dihydroorotase (443 aa).

Zn(2+) is bound by residues H80 and H82. Substrate is bound by residues 82–84 and N114; that span reads HFR. 3 residues coordinate Zn(2+): D170, H197, and H251. N297 lines the substrate pocket. D324 contacts Zn(2+). D324 is a catalytic residue. Residues H328 and 342 to 343 contribute to the substrate site; that span reads FG.

This sequence belongs to the metallo-dependent hydrolases superfamily. DHOase family. Class I DHOase subfamily. The cofactor is Zn(2+).

The catalysed reaction is (S)-dihydroorotate + H2O = N-carbamoyl-L-aspartate + H(+). Its pathway is pyrimidine metabolism; UMP biosynthesis via de novo pathway; (S)-dihydroorotate from bicarbonate: step 3/3. Catalyzes the reversible cyclization of carbamoyl aspartate to dihydroorotate. The sequence is that of Dihydroorotase from Wolbachia sp. subsp. Brugia malayi (strain TRS).